Here is a 177-residue protein sequence, read N- to C-terminus: 3-hydroxydecanoyl-[acyl-carrier-protein] dehydratase (177 aa).

The active site involves His-76.

It belongs to the thioester dehydratase family. FabA subfamily. Homodimer.

The protein resides in the cytoplasm. The catalysed reaction is a (3R)-hydroxyacyl-[ACP] = a (2E)-enoyl-[ACP] + H2O. It carries out the reaction (3R)-hydroxydecanoyl-[ACP] = (2E)-decenoyl-[ACP] + H2O. It catalyses the reaction (2E)-decenoyl-[ACP] = (3Z)-decenoyl-[ACP]. It functions in the pathway lipid metabolism; fatty acid biosynthesis. Its function is as follows. Necessary for the introduction of cis unsaturation into fatty acids. Catalyzes the dehydration of (3R)-3-hydroxydecanoyl-ACP to E-(2)-decenoyl-ACP and then its isomerization to Z-(3)-decenoyl-ACP. Can catalyze the dehydratase reaction for beta-hydroxyacyl-ACPs with saturated chain lengths up to 16:0, being most active on intermediate chain length. The protein is 3-hydroxydecanoyl-[acyl-carrier-protein] dehydratase of Actinobacillus succinogenes (strain ATCC 55618 / DSM 22257 / CCUG 43843 / 130Z).